The following is a 340-amino-acid chain: Ferrochelatase (340 aa).

Fe cation-binding residues include His-189 and Glu-292.

Belongs to the ferrochelatase family.

Its subcellular location is the cytoplasm. The enzyme catalyses heme b + 2 H(+) = protoporphyrin IX + Fe(2+). It functions in the pathway porphyrin-containing compound metabolism; protoheme biosynthesis; protoheme from protoporphyrin-IX: step 1/1. Its function is as follows. Catalyzes the ferrous insertion into protoporphyrin IX. This chain is Ferrochelatase, found in Pseudomonas fluorescens (strain ATCC BAA-477 / NRRL B-23932 / Pf-5).